Here is a 67-residue protein sequence, read N- to C-terminus: Protein AaeX (67 aa).

2 helical membrane passes run 10-30 (FGLSFPPVFFVLLVSLTLFFV) and 43-63 (FVWHPALFNSALFCCLFYLLF).

It belongs to the AaeX family.

The protein localises to the cell membrane. The chain is Protein AaeX from Pectobacterium carotovorum subsp. carotovorum (strain PC1).